The following is a 326-amino-acid chain: Glutamine synthetase (326 aa).

In terms of domain architecture, GS beta-grasp spans 4 to 85 (FKLEYIWLDG…VMCEVMMPDG (82 aa)). Residues 83 to 326 (PDGHAHASNA…GDPYQIVRRF (244 aa)) form the GS catalytic domain. 2 residues coordinate Mg(2+): Glu-107 and Glu-109. Glu-164 contacts ATP. Residues Glu-169 and Glu-176 each contribute to the Mg(2+) site. Glu-275 contributes to the L-glutamate binding site.

Belongs to the glutamine synthetase family. In terms of assembly, homooctamer and homotetramer. Mg(2+) is required as a cofactor.

It is found in the cytoplasm. It carries out the reaction L-glutamate + NH4(+) + ATP = L-glutamine + ADP + phosphate + H(+). Its activity is regulated as follows. Transferase activity is inhibited by NH(4)Cl. In terms of biological role, catalyzes the ATP-dependent biosynthesis of glutamine from glutamate and ammonia. This is Glutamine synthetase from Rhizobium leguminosarum bv. phaseoli.